An 88-amino-acid polypeptide reads, in one-letter code: Small ribosomal subunit protein uS15 (88 aa).

It belongs to the universal ribosomal protein uS15 family. Part of the 30S ribosomal subunit. Forms a bridge to the 50S subunit in the 70S ribosome, contacting the 23S rRNA.

Its function is as follows. One of the primary rRNA binding proteins, it binds directly to 16S rRNA where it helps nucleate assembly of the platform of the 30S subunit by binding and bridging several RNA helices of the 16S rRNA. In terms of biological role, forms an intersubunit bridge (bridge B4) with the 23S rRNA of the 50S subunit in the ribosome. This Thermoanaerobacter pseudethanolicus (strain ATCC 33223 / 39E) (Clostridium thermohydrosulfuricum) protein is Small ribosomal subunit protein uS15.